Here is a 170-residue protein sequence, read N- to C-terminus: Acetolactate synthase small subunit (170 aa).

The region spanning T9–E83 is the ACT domain. An Isoglutamyl lysine isopeptide (Lys-Gln) (interchain with Q-Cter in protein Pup) cross-link involves residue K46.

The protein belongs to the acetolactate synthase small subunit family. As to quaternary structure, dimer of large and small chains.

The catalysed reaction is 2 pyruvate + H(+) = (2S)-2-acetolactate + CO2. It functions in the pathway amino-acid biosynthesis; L-isoleucine biosynthesis; L-isoleucine from 2-oxobutanoate: step 1/4. Its pathway is amino-acid biosynthesis; L-valine biosynthesis; L-valine from pyruvate: step 1/4. This is Acetolactate synthase small subunit (ilvH) from Mycolicibacterium smegmatis (strain ATCC 700084 / mc(2)155) (Mycobacterium smegmatis).